The chain runs to 450 residues: tRNA-2-methylthio-N(6)-dimethylallyladenosine synthase (450 aa).

Positions 3–119 (RRYYITTFGC…LGELLEQVWN (117 aa)) constitute an MTTase N-terminal domain. 6 residues coordinate [4Fe-4S] cluster: C12, C48, C82, C154, C158, and C161. The Radical SAM core domain occupies 140-377 (RDSTVTAWVN…NHLVAKIAGD (238 aa)). A TRAM domain is found at 380–444 (QRYLGREEVV…AFSLSGVPLA (65 aa)).

This sequence belongs to the methylthiotransferase family. MiaB subfamily. As to quaternary structure, monomer. [4Fe-4S] cluster is required as a cofactor.

The protein localises to the cytoplasm. The catalysed reaction is N(6)-dimethylallyladenosine(37) in tRNA + (sulfur carrier)-SH + AH2 + 2 S-adenosyl-L-methionine = 2-methylsulfanyl-N(6)-dimethylallyladenosine(37) in tRNA + (sulfur carrier)-H + 5'-deoxyadenosine + L-methionine + A + S-adenosyl-L-homocysteine + 2 H(+). Functionally, catalyzes the methylthiolation of N6-(dimethylallyl)adenosine (i(6)A), leading to the formation of 2-methylthio-N6-(dimethylallyl)adenosine (ms(2)i(6)A) at position 37 in tRNAs that read codons beginning with uridine. This chain is tRNA-2-methylthio-N(6)-dimethylallyladenosine synthase, found in Thermosynechococcus vestitus (strain NIES-2133 / IAM M-273 / BP-1).